A 334-amino-acid chain; its full sequence is DCN1-like protein 3 (334 aa).

The 190-residue stretch at 112–301 (VSHQTLSKLF…LFDDFVDYEK (190 aa)) folds into the DCUN1 domain. Positions 308–334 (SGIHDDDNNNDDPLQSHVKAEDPGLVS) are disordered. Positions 325-334 (VKAEDPGLVS) are enriched in basic and acidic residues.

The protein resides in the cell membrane. Promotes neddylation of cullin components of SCF-type E3 ubiquitin ligase complexes and thus regulates SCF-type complex activity. Function promotes cell proliferation. The protein is DCN1-like protein 3 of Drosophila melanogaster (Fruit fly).